The sequence spans 388 residues: Chalcone synthase D (388 aa).

Cys164 is a catalytic residue.

This sequence belongs to the thiolase-like superfamily. Chalcone/stilbene synthases family.

The enzyme catalyses (E)-4-coumaroyl-CoA + 3 malonyl-CoA + 3 H(+) = 2',4,4',6'-tetrahydroxychalcone + 3 CO2 + 4 CoA. It functions in the pathway secondary metabolite biosynthesis; flavonoid biosynthesis. The primary product of this enzyme is 4,2',4',6'-tetrahydroxychalcone (also termed naringenin-chalcone or chalcone) which can under specific conditions spontaneously isomerize into naringenin. This Ipomoea nil (Japanese morning glory) protein is Chalcone synthase D (CHSD).